The following is a 205-amino-acid chain: dTTP/UTP pyrophosphatase (205 aa).

The active-site Proton acceptor is the aspartate 81.

Belongs to the Maf family. YhdE subfamily. A divalent metal cation serves as cofactor.

It is found in the cytoplasm. It catalyses the reaction dTTP + H2O = dTMP + diphosphate + H(+). The catalysed reaction is UTP + H2O = UMP + diphosphate + H(+). In terms of biological role, nucleoside triphosphate pyrophosphatase that hydrolyzes dTTP and UTP. May have a dual role in cell division arrest and in preventing the incorporation of modified nucleotides into cellular nucleic acids. This is dTTP/UTP pyrophosphatase from Agathobacter rectalis (strain ATCC 33656 / DSM 3377 / JCM 17463 / KCTC 5835 / VPI 0990) (Eubacterium rectale).